The following is an 83-amino-acid chain: Putative snRNP Sm-like protein (83 aa).

One can recognise a Sm domain in the interval 9–81 (KPMDVLKSAL…VIFVSPSKGD (73 aa)).

It belongs to the snRNP Sm proteins family.

This is Putative snRNP Sm-like protein from Thermoplasma acidophilum (strain ATCC 25905 / DSM 1728 / JCM 9062 / NBRC 15155 / AMRC-C165).